Consider the following 322-residue polypeptide: Probable manganese-dependent inorganic pyrophosphatase (322 aa).

Mn(2+)-binding residues include His10, Asp14, Asp16, Asp86, His108, and Asp160.

It belongs to the PPase class C family. It depends on Mn(2+) as a cofactor.

The protein localises to the cytoplasm. The enzyme catalyses diphosphate + H2O = 2 phosphate + H(+). The protein is Probable manganese-dependent inorganic pyrophosphatase (ppaC) of Archaeoglobus fulgidus (strain ATCC 49558 / DSM 4304 / JCM 9628 / NBRC 100126 / VC-16).